Consider the following 1048-residue polypeptide: Ceruloplasmin (1048 aa).

The first 19 residues, 1 to 19 (MKIFLLCIFLILCGTSVWA), serve as a signal peptide directing secretion. 3 consecutive Plastocyanin-like domains span residues 20–200 (KDKH…LIHC), 209–357 (KEKN…VQDC), and 370–554 (NVRH…MKIC). Residues Tyr55, Gly64, and Tyr67 each contribute to the Na(+) site. Cu(2+) contacts are provided by His120 and His122. An O2-binding site is contributed by His120. Ca(2+) is bound at residue Lys128. N-linked (GlcNAc...) asparagine glycosylation is present at Asn138. Gln143, Asp146, and Asp147 together coordinate Ca(2+). Cys174 and Cys200 are oxidised to a cystine. Cu(2+) contacts are provided by His180 and His182. His180 serves as a coordination point for O2. Asn227 carries an N-linked (GlcNAc...) asparagine glycan. Ser256 lines the Na(+) pocket. Residues Cys276 and Cys357 are joined by a disulfide bond. Positions 295, 338, and 343 each coordinate Cu(2+). Phe408, Gly417, and Tyr420 together coordinate Na(+). A disulfide bond links Cys530 and Cys554. Residues Asn556 and Asn582 are each glycosylated (N-linked (GlcNAc...) asparagine). Residues 564 to 712 (RLKNVDKEFY…MKQKYTVSQC (149 aa)) form the Plastocyanin-like 4 domain. Na(+) is bound at residue Ser611. An intrachain disulfide couples Cys631 to Cys712. Cu(2+)-binding residues include His650, Cys693, His698, and Met703. Cys693 functions as the Nucleophile; for glutathione peroxidase activity in the catalytic mechanism. Position 716 is a phosphoserine (Ser716). Plastocyanin-like domains are found at residues 724–894 (GERT…LIVC) and 902–1044 (SNPI…PNEE). An N-linked (GlcNAc...) asparagine glycan is attached at Asn756. The Na(+) site is built by Phe761, Gly770, and Tyr773. An intrachain disulfide couples Cys868 to Cys894. The N-linked (GlcNAc...) asparagine glycan is linked to Asn920. Position 949 (Ser949) interacts with Na(+). Positions 977, 980, 982, 1022, 1023, 1024, 1028, and 1033 each coordinate Cu(2+). O2 is bound by residues His980 and His982. Residue His1024 participates in O2 binding.

This sequence belongs to the multicopper oxidase family. In terms of assembly, found in a complex with MPO and LTF; interacts directly with MPO and LTF, which allows Fe(3+) incorporation into LTF, activation of CP ferroxidase activity and protection of CP antioxidant properties by MPO. Cu(2+) serves as cofactor. In terms of tissue distribution, expressed by the liver and secreted in plasma. Also expressed in the hypothalamus, spleen and uterus. No expression in the cortex, heart, intestine or kidney.

It localises to the secreted. It catalyses the reaction 4 Fe(2+) + O2 + 4 H(+) = 4 Fe(3+) + 2 H2O. It carries out the reaction 4 Cu(+) + O2 + 4 H(+) = 4 Cu(2+) + 2 H2O. The catalysed reaction is a hydroperoxide + 2 glutathione = an alcohol + glutathione disulfide + H2O. The enzyme catalyses 4 nitric oxide + O2 + 2 H2O = 4 nitrite + 4 H(+). It catalyses the reaction 2 glutathione + H2O2 = glutathione disulfide + 2 H2O. Its function is as follows. Multifunctional blue, copper-binding (6-7 atoms per molecule) glycoprotein. It has ferroxidase activity oxidizing Fe(2+) to Fe(3+) without releasing radical oxygen species. It is involved in iron transport across the cell membrane. Copper ions provide a large number of enzymatic activites. Oxidizes highly toxic ferrous ions to the ferric state for further incorporation onto apo-transferrins, catalyzes Cu(+) oxidation and promotes the oxidation of biogenic amines such as norepinephrin and serotonin. Provides Cu(2+) ions for the ascorbate-mediated deaminase degradation of the heparan sulfate chains of GPC1. Has glutathione peroxidase-like activity, can remove both hydrogen peroxide and lipid hydroperoxide in the presence of thiols. Also shows NO-oxidase and NO2 synthase activities that determine endocrine NO homeostasis. In Ovis aries (Sheep), this protein is Ceruloplasmin (CP).